The following is a 457-amino-acid chain: Siroheme synthase (457 aa).

The interval 1-204 (MDHLPIFCQL…NDQKAITETT (204 aa)) is precorrin-2 dehydrogenase /sirohydrochlorin ferrochelatase. NAD(+) is bound by residues 22–23 (DV) and 43–44 (LA). S128 carries the phosphoserine modification. A uroporphyrinogen-III C-methyltransferase region spans residues 216-457 (GEVVLVGAGP…RDKLNWFSNH (242 aa)). An S-adenosyl-L-methionine-binding site is contributed by P225. D248 acts as the Proton acceptor in catalysis. The active-site Proton donor is K270. Residues 301–303 (GGD), I306, 331–332 (TA), M382, and G411 each bind S-adenosyl-L-methionine.

The protein in the N-terminal section; belongs to the precorrin-2 dehydrogenase / sirohydrochlorin ferrochelatase family. This sequence in the C-terminal section; belongs to the precorrin methyltransferase family.

The catalysed reaction is uroporphyrinogen III + 2 S-adenosyl-L-methionine = precorrin-2 + 2 S-adenosyl-L-homocysteine + H(+). It carries out the reaction precorrin-2 + NAD(+) = sirohydrochlorin + NADH + 2 H(+). It catalyses the reaction siroheme + 2 H(+) = sirohydrochlorin + Fe(2+). Its pathway is cofactor biosynthesis; adenosylcobalamin biosynthesis; precorrin-2 from uroporphyrinogen III: step 1/1. The protein operates within cofactor biosynthesis; adenosylcobalamin biosynthesis; sirohydrochlorin from precorrin-2: step 1/1. It participates in porphyrin-containing compound metabolism; siroheme biosynthesis; precorrin-2 from uroporphyrinogen III: step 1/1. It functions in the pathway porphyrin-containing compound metabolism; siroheme biosynthesis; siroheme from sirohydrochlorin: step 1/1. Its pathway is porphyrin-containing compound metabolism; siroheme biosynthesis; sirohydrochlorin from precorrin-2: step 1/1. Functionally, multifunctional enzyme that catalyzes the SAM-dependent methylations of uroporphyrinogen III at position C-2 and C-7 to form precorrin-2 via precorrin-1. Then it catalyzes the NAD-dependent ring dehydrogenation of precorrin-2 to yield sirohydrochlorin. Finally, it catalyzes the ferrochelation of sirohydrochlorin to yield siroheme. In Escherichia coli O17:K52:H18 (strain UMN026 / ExPEC), this protein is Siroheme synthase.